A 740-amino-acid polypeptide reads, in one-letter code: Elongation factor 2 (740 aa).

The 246-residue stretch at 18–263 (EQVRNIGIIA…MVVRWVPNPR (246 aa)) folds into the tr-type G domain. Residues 27–34 (AHVDHGKT), 93–97 (DTPGH), and 147–150 (NKVD) each bind GTP. His-606 is subject to Diphthamide.

Belongs to the TRAFAC class translation factor GTPase superfamily. Classic translation factor GTPase family. EF-G/EF-2 subfamily.

It localises to the cytoplasm. In terms of biological role, catalyzes the GTP-dependent ribosomal translocation step during translation elongation. During this step, the ribosome changes from the pre-translocational (PRE) to the post-translocational (POST) state as the newly formed A-site-bound peptidyl-tRNA and P-site-bound deacylated tRNA move to the P and E sites, respectively. Catalyzes the coordinated movement of the two tRNA molecules, the mRNA and conformational changes in the ribosome. The polypeptide is Elongation factor 2 (Ignicoccus hospitalis (strain KIN4/I / DSM 18386 / JCM 14125)).